A 194-amino-acid chain; its full sequence is [Ribosomal protein uS5]-alanine N-acetyltransferase (194 aa).

The N-acetyltransferase domain maps to 18–188 (LVVRLVHDRD…DHVLTALTTP (171 aa)).

The protein belongs to the acetyltransferase family. RimJ subfamily.

It is found in the cytoplasm. It carries out the reaction N-terminal L-alanyl-[ribosomal protein uS5] + acetyl-CoA = N-terminal N(alpha)-acetyl-L-alanyl-[ribosomal protein uS5] + CoA + H(+). Acetylates the N-terminal alanine of ribosomal protein uS5. This is [Ribosomal protein uS5]-alanine N-acetyltransferase (rimJ) from Shigella flexneri.